A 100-amino-acid polypeptide reads, in one-letter code: uncharacterized protein (100 aa).

This is an uncharacterized protein from Saccharomyces cerevisiae (strain ATCC 204508 / S288c) (Baker's yeast).